The sequence spans 98 residues: C-X-C motif chemokine 10 (98 aa).

The N-terminal stretch at methionine 1–glycine 21 is a signal peptide. Position 26 is a citrulline (arginine 26). 2 cysteine pairs are disulfide-bonded: cysteine 30/cysteine 57 and cysteine 32/cysteine 74.

This sequence belongs to the intercrine alpha (chemokine CxC) family. Monomer, dimer, and tetramer. Interacts with CXCR3 (via N-terminus). As to expression, in the central nervous system, CXCL10 is predominantly localized to activated neurons. Expressed in both microglia and astrocytes.

The protein localises to the secreted. In terms of biological role, pro-inflammatory cytokine that is involved in a wide variety of processes such as chemotaxis, differentiation, and activation of peripheral immune cells, regulation of cell growth, apoptosis and modulation of angiostatic effects. Plays thereby an important role during viral infections by stimulating the activation and migration of immune cells to the infected sites. Mechanistically, binding of CXCL10 to the CXCR3 receptor activates G protein-mediated signaling and results in downstream activation of phospholipase C-dependent pathway, an increase in intracellular calcium production and actin reorganization. In turn, recruitment of activated Th1 lymphocytes occurs at sites of inflammation. Activation of the CXCL10/CXCR3 axis also plays an important role in neurons in response to brain injury for activating microglia, the resident macrophage population of the central nervous system, and directing them to the lesion site. This recruitment is an essential element for neuronal reorganization. The protein is C-X-C motif chemokine 10 (Cxcl10) of Rattus norvegicus (Rat).